The sequence spans 419 residues: Serine hydroxymethyltransferase (419 aa).

(6S)-5,6,7,8-tetrahydrofolate is bound by residues Leu121 and 125–127; that span reads GHL. Lys230 is modified (N6-(pyridoxal phosphate)lysine). (6S)-5,6,7,8-tetrahydrofolate contacts are provided by residues Glu246 and 355 to 357; that span reads SPF.

It belongs to the SHMT family. As to quaternary structure, homodimer. The cofactor is pyridoxal 5'-phosphate.

It localises to the cytoplasm. It carries out the reaction (6R)-5,10-methylene-5,6,7,8-tetrahydrofolate + glycine + H2O = (6S)-5,6,7,8-tetrahydrofolate + L-serine. The protein operates within one-carbon metabolism; tetrahydrofolate interconversion. It functions in the pathway amino-acid biosynthesis; glycine biosynthesis; glycine from L-serine: step 1/1. Functionally, catalyzes the reversible interconversion of serine and glycine with tetrahydrofolate (THF) serving as the one-carbon carrier. This reaction serves as the major source of one-carbon groups required for the biosynthesis of purines, thymidylate, methionine, and other important biomolecules. Also exhibits THF-independent aldolase activity toward beta-hydroxyamino acids, producing glycine and aldehydes, via a retro-aldol mechanism. The polypeptide is Serine hydroxymethyltransferase (Streptococcus suis (strain 98HAH33)).